Reading from the N-terminus, the 349-residue chain is MISVGIVGGTGYTGVELLRILLRHPKAQVRVLTSRTEAGKPVADMFPNLRGHTDLQFSDLNIDALKECDVVFFATPHGVAMQHAKDLIAAGTKVIDLAADFRLQNLEQFEKWYGMEHACPDVLKDSVYGLTELNREKIKQAQVIGNPGCYPTTVQLGLAPLLKSAQALIETKNIIIDAKSGVSGAGRKASLGMIYSENADNFKAYGVAGHRHHPEIVEALENIAGKKDVFEGLLFVPHLVPMIRGMLSTIYVDLTEAGKQTDLQALYENFYANEKFVDVMPANSSPETRSVRGANELRIALYKPQPNKLIILAAQDNLVKGASGQAVQNMNLMFGFNEDEGLQGIGLLP.

Residue Cys-149 is part of the active site.

This sequence belongs to the NAGSA dehydrogenase family. Type 1 subfamily.

It is found in the cytoplasm. It carries out the reaction N-acetyl-L-glutamate 5-semialdehyde + phosphate + NADP(+) = N-acetyl-L-glutamyl 5-phosphate + NADPH + H(+). It participates in amino-acid biosynthesis; L-arginine biosynthesis; N(2)-acetyl-L-ornithine from L-glutamate: step 3/4. Its function is as follows. Catalyzes the NADPH-dependent reduction of N-acetyl-5-glutamyl phosphate to yield N-acetyl-L-glutamate 5-semialdehyde. The sequence is that of N-acetyl-gamma-glutamyl-phosphate reductase from Acinetobacter baumannii (strain SDF).